The following is a 423-amino-acid chain: POU domain, class 5, transcription factor 1.3 (423 aa).

The disordered stretch occupies residues 85–211; sequence GALSSGDPSP…GSGNEEDGTT (127 aa). The segment covering 94 to 110 has biased composition (basic and acidic residues); the sequence is PEGRNEEDHGSISEERS. Composition is skewed to polar residues over residues 111 to 120, 156 to 173, and 194 to 203; these read SGTPSPNSPM, PQQS…GASN, and PSPNNASFGS. Positions 207 to 281 constitute a POU-specific domain; it reads EDGTTLEEME…LLEQWLGEAE (75 aa). The homeobox DNA-binding region spans 301–360; sequence KRKMRTCFDSVLKGRLEGHFMCNQKPGARELAEIAKELGLEKDVVRVWFCNRRQKEKSKS.

Belongs to the POU transcription factor family. Class-5 subfamily. In terms of assembly, interacts with the transcription factors tcf7l1/tcf3 and vegt.

Its subcellular location is the nucleus. In terms of biological role, transcription factor that binds to the octamer motif (5'-ATTTGCAT-3'). Antagonizes the activity of nodal/activin signaling during gastrulation to suppress mesendoderm formation. Acts maternally to inhibit vegt and beta-catenin-activated gene transcription, probably by forming a transcriptional repression complex on the promoters of target genes. Binds to an octamer motif in interspersed RNA. The chain is POU domain, class 5, transcription factor 1.3 (pou5f1.3) from Xenopus tropicalis (Western clawed frog).